A 331-amino-acid polypeptide reads, in one-letter code: 6-phosphogluconolactonase (331 aa).

N6-acetyllysine is present on lysine 287.

The protein belongs to the cycloisomerase 2 family.

It carries out the reaction 6-phospho-D-glucono-1,5-lactone + H2O = 6-phospho-D-gluconate + H(+). It participates in carbohydrate degradation; pentose phosphate pathway; D-ribulose 5-phosphate from D-glucose 6-phosphate (oxidative stage): step 2/3. Catalyzes the hydrolysis of 6-phosphogluconolactone to 6-phosphogluconate. The protein is 6-phosphogluconolactonase of Shigella flexneri.